The following is a 947-amino-acid chain: Bifunctional glutamine synthetase adenylyltransferase/adenylyl-removing enzyme (947 aa).

The interval 1–440 (MTPLSSPLRQ…VFNELIGDDE (440 aa)) is adenylyl removase. The segment at 450-947 (SEPWREVWQD…ASWRKWLVAV (498 aa)) is adenylyl transferase.

Belongs to the GlnE family. It depends on Mg(2+) as a cofactor.

The catalysed reaction is [glutamine synthetase]-O(4)-(5'-adenylyl)-L-tyrosine + phosphate = [glutamine synthetase]-L-tyrosine + ADP. It catalyses the reaction [glutamine synthetase]-L-tyrosine + ATP = [glutamine synthetase]-O(4)-(5'-adenylyl)-L-tyrosine + diphosphate. Its function is as follows. Involved in the regulation of glutamine synthetase GlnA, a key enzyme in the process to assimilate ammonia. When cellular nitrogen levels are high, the C-terminal adenylyl transferase (AT) inactivates GlnA by covalent transfer of an adenylyl group from ATP to specific tyrosine residue of GlnA, thus reducing its activity. Conversely, when nitrogen levels are low, the N-terminal adenylyl removase (AR) activates GlnA by removing the adenylyl group by phosphorolysis, increasing its activity. The regulatory region of GlnE binds the signal transduction protein PII (GlnB) which indicates the nitrogen status of the cell. This is Bifunctional glutamine synthetase adenylyltransferase/adenylyl-removing enzyme from Salmonella arizonae (strain ATCC BAA-731 / CDC346-86 / RSK2980).